We begin with the raw amino-acid sequence, 289 residues long: tRNA pseudouridine synthase B (289 aa).

The active-site Nucleophile is the D38.

Belongs to the pseudouridine synthase TruB family. Type 1 subfamily.

It carries out the reaction uridine(55) in tRNA = pseudouridine(55) in tRNA. In terms of biological role, responsible for synthesis of pseudouridine from uracil-55 in the psi GC loop of transfer RNAs. This chain is tRNA pseudouridine synthase B, found in Clostridium kluyveri (strain ATCC 8527 / DSM 555 / NBRC 12016 / NCIMB 10680 / K1).